We begin with the raw amino-acid sequence, 620 residues long: Dihydroxy-acid dehydratase (620 aa).

Aspartate 81 lines the Mg(2+) pocket. [2Fe-2S] cluster is bound at residue cysteine 122. The Mg(2+) site is built by aspartate 123 and lysine 124. Lysine 124 bears the N6-carboxylysine mark. Residue cysteine 195 coordinates [2Fe-2S] cluster. Glutamate 491 serves as a coordination point for Mg(2+). Catalysis depends on serine 517, which acts as the Proton acceptor.

It belongs to the IlvD/Edd family. In terms of assembly, homodimer. [2Fe-2S] cluster serves as cofactor. Requires Mg(2+) as cofactor.

The enzyme catalyses (2R)-2,3-dihydroxy-3-methylbutanoate = 3-methyl-2-oxobutanoate + H2O. It catalyses the reaction (2R,3R)-2,3-dihydroxy-3-methylpentanoate = (S)-3-methyl-2-oxopentanoate + H2O. It participates in amino-acid biosynthesis; L-isoleucine biosynthesis; L-isoleucine from 2-oxobutanoate: step 3/4. It functions in the pathway amino-acid biosynthesis; L-valine biosynthesis; L-valine from pyruvate: step 3/4. Its function is as follows. Functions in the biosynthesis of branched-chain amino acids. Catalyzes the dehydration of (2R,3R)-2,3-dihydroxy-3-methylpentanoate (2,3-dihydroxy-3-methylvalerate) into 2-oxo-3-methylpentanoate (2-oxo-3-methylvalerate) and of (2R)-2,3-dihydroxy-3-methylbutanoate (2,3-dihydroxyisovalerate) into 2-oxo-3-methylbutanoate (2-oxoisovalerate), the penultimate precursor to L-isoleucine and L-valine, respectively. This is Dihydroxy-acid dehydratase from Colwellia psychrerythraea (strain 34H / ATCC BAA-681) (Vibrio psychroerythus).